A 634-amino-acid chain; its full sequence is Phosphatase and actin regulator 2 (634 aa).

Disordered regions lie at residues 1–32 (MDNA…KRKG), 84–344 (LPDQ…PLED), 412–471 (PQLL…ALAS), and 485–508 (NRPS…ERQE). Residue Asp-2 is the site of N-myristoyl glycine attachment. Positions 13–26 (IANSDGPTAGSQTP) are enriched in polar residues. Phosphoserine is present on Ser-16. Thr-25 carries the phosphothreonine modification. The RPEL 1 repeat unit spans residues 60-85 (AVLERKISTRQSREELIRRGVLKELP). Basic and acidic residues-rich tracts occupy residues 108–120 (ESTR…KSEE) and 137–147 (EDKKENTENHS). Over residues 153–162 (PALPPSAPPK) the composition is skewed to pro residues. Low complexity-rich tracts occupy residues 231 to 247 (GSKA…SSRP) and 276 to 290 (TSHL…GTSD). The segment covering 291-304 (LKGEPAETRVESFK) has biased composition (basic and acidic residues). Residues 324–341 (VPPPPVAPAPSPLAPPLP) show a composition bias toward pro residues. Ser-423 is subject to Phosphoserine. The segment covering 452 to 464 (TDDEDEDEDEDGS) has biased composition (acidic residues). 3 RPEL repeats span residues 477–502 (DTLA…QRTS), 515–540 (TKLV…KQKN), and 553–578 (RRLS…RFNE). Residues 488 to 508 (SKKELEDKNILQRTSEEERQE) are compositionally biased toward basic and acidic residues. A phosphoserine mark is found at Ser-522 and Ser-560.

This sequence belongs to the phosphatase and actin regulator family. As to quaternary structure, binds PPP1CA and actin.

It is found in the membrane. The chain is Phosphatase and actin regulator 2 (PHACTR2) from Homo sapiens (Human).